Here is a 527-residue protein sequence, read N- to C-terminus: Peptide chain release factor 3 (527 aa).

The tr-type G domain occupies 9–277; that stretch reads AKRRTFAIIS…AVVDWAPRPL (269 aa). GTP is bound by residues 18 to 25, 86 to 90, and 140 to 143; these read SHPDAGKT, DTPGH, and NKLD.

The protein belongs to the TRAFAC class translation factor GTPase superfamily. Classic translation factor GTPase family. PrfC subfamily.

It localises to the cytoplasm. In terms of biological role, increases the formation of ribosomal termination complexes and stimulates activities of RF-1 and RF-2. It binds guanine nucleotides and has strong preference for UGA stop codons. It may interact directly with the ribosome. The stimulation of RF-1 and RF-2 is significantly reduced by GTP and GDP, but not by GMP. The sequence is that of Peptide chain release factor 3 from Ectopseudomonas mendocina (strain ymp) (Pseudomonas mendocina).